Consider the following 281-residue polypeptide: MQRQGTVRAPCSRIVDPHQKVNYTVCGWIITIISYLVVLFTLPLSAFFCLKVVQEYERAVIFRLGRLKHGGARGPGIFFIIPCIESFKKIDLRVVSFDVPPQEILSKDSVTVSVDAVIYFRISNATVSVINVEDAARSTKLLAQTTLRNFLGTRTLAEMLSSRDAISMQMQAALDEATDPWGVKVERVEIKDVRLPIQLQRAMAAEAEAARAAGAKIIAAEGEQLASRALADAADVIATSPCAIQLRYLQTLNSISSEKNNTIIFPFPTELIAKFIQSAAA.

A helical transmembrane segment spans residues 28–48 (WIITIISYLVVLFTLPLSAFF).

It belongs to the band 7/mec-2 family.

It is found in the membrane. In Caenorhabditis elegans, this protein is Stomatin-4 (sto-4).